The sequence spans 235 residues: Probable transglycosylase SceD (235 aa).

The N-terminal stretch at 1–26 (MKKTIIASSLAVGLGVVAGNAGHADA) is a signal peptide. Residues 90–159 (QQDVSAQAST…NASSGSSVNV (70 aa)) are disordered. Over residues 99-110 (TVSNQTSAEQVG) the composition is skewed to polar residues. The span at 111 to 159 (SQQQSSQAQPTQTQQAPQTEQTQQPQTEATTSNSSSSNNNASSGSSVNV) shows a compositional bias: low complexity.

It belongs to the transglycosylase family. SceD subfamily.

The protein localises to the secreted. Functionally, is able to cleave peptidoglycan and affects clumping and separation of bacterial cells. In Staphylococcus haemolyticus (strain JCSC1435), this protein is Probable transglycosylase SceD (sceD).